Reading from the N-terminus, the 507-residue chain is uncharacterized protein (507 aa).

12 consecutive transmembrane segments (helical) span residues 11-31 (ILCF…IFPI), 97-117 (AWIA…YGHL), 125-145 (PVSF…GFAP), 149-169 (VFAV…IVFY), 187-207 (FFNW…CGYW), 209-229 (SAAI…LWLP), 283-303 (LFSS…WFST), 326-346 (FVQA…DLFI), 354-374 (LHQV…ALMI), 388-408 (LAII…WDAC), 423-443 (IGIG…PQMA), and 452-472 (IPYI…CFFL).

It belongs to the major facilitator superfamily.

The protein localises to the membrane. This is an uncharacterized protein from Caenorhabditis elegans.